A 325-amino-acid chain; its full sequence is Glutarate 2-hydroxylase (325 aa).

The Fe cation site is built by His-160, Asp-162, and His-292.

The protein belongs to the glutarate hydroxylase family. As to quaternary structure, homotetramer. Fe(2+) is required as a cofactor.

It catalyses the reaction glutarate + 2-oxoglutarate + O2 = (S)-2-hydroxyglutarate + succinate + CO2. It participates in amino-acid degradation. Functionally, acts as an alpha-ketoglutarate-dependent dioxygenase catalyzing hydroxylation of glutarate (GA) to L-2-hydroxyglutarate (L2HG). Functions in a L-lysine degradation pathway that proceeds via cadaverine, glutarate and L-2-hydroxyglutarate. In Pseudomonas putida (strain ATCC 700007 / DSM 6899 / JCM 31910 / BCRC 17059 / LMG 24140 / F1), this protein is Glutarate 2-hydroxylase.